The following is a 189-amino-acid chain: Putative ankyrin repeat protein TV1425 (189 aa).

ANK repeat units lie at residues Y31–D60, E64–T93, S97–D126, and E130–A159.

The chain is Putative ankyrin repeat protein TV1425 from Thermoplasma volcanium (strain ATCC 51530 / DSM 4299 / JCM 9571 / NBRC 15438 / GSS1).